We begin with the raw amino-acid sequence, 512 residues long: Cytochrome P450 1A1 (512 aa).

Positions 29 to 40 (SRPRVPKGLKNP) are mitochondrial targeting signal. S67 is a glycosylation site (O-linked (GlcNAc) serine). F224 serves as a coordination point for substrate. C457 contacts heme.

It belongs to the cytochrome P450 family. As to quaternary structure, interacts with cytosolic chaperones HSP70 and HSP90; this interaction is required for initial targeting to mitochondria. Interacts (via mitochondrial targeting signal) with TOMM40 (via N-terminus); this interaction is required for translocation across the mitochondrial outer membrane. Requires heme as cofactor.

The protein resides in the endoplasmic reticulum membrane. It is found in the mitochondrion inner membrane. The protein localises to the microsome membrane. It localises to the cytoplasm. The catalysed reaction is an organic molecule + reduced [NADPH--hemoprotein reductase] + O2 = an alcohol + oxidized [NADPH--hemoprotein reductase] + H2O + H(+). It carries out the reaction estrone + reduced [NADPH--hemoprotein reductase] + O2 = 2-hydroxyestrone + oxidized [NADPH--hemoprotein reductase] + H2O + H(+). It catalyses the reaction estrone + reduced [NADPH--hemoprotein reductase] + O2 = 4-hydroxyestrone + oxidized [NADPH--hemoprotein reductase] + H2O + H(+). The enzyme catalyses estrone + reduced [NADPH--hemoprotein reductase] + O2 = 6alpha-hydroxyestrone + oxidized [NADPH--hemoprotein reductase] + H2O + H(+). The catalysed reaction is estrone + reduced [NADPH--hemoprotein reductase] + O2 = 15alpha-hydroxyestrone + oxidized [NADPH--hemoprotein reductase] + H2O + H(+). It carries out the reaction estrone + reduced [NADPH--hemoprotein reductase] + O2 = 16alpha-hydroxyestrone + oxidized [NADPH--hemoprotein reductase] + H2O + H(+). It catalyses the reaction 17beta-estradiol + reduced [NADPH--hemoprotein reductase] + O2 = 2-hydroxy-17beta-estradiol + oxidized [NADPH--hemoprotein reductase] + H2O + H(+). The enzyme catalyses 17beta-estradiol + reduced [NADPH--hemoprotein reductase] + O2 = 4-hydroxy-17beta-estradiol + oxidized [NADPH--hemoprotein reductase] + H2O + H(+). The catalysed reaction is 17beta-estradiol + reduced [NADPH--hemoprotein reductase] + O2 = 6alpha-hydroxy-17beta-estradiol + oxidized [NADPH--hemoprotein reductase] + H2O + H(+). It carries out the reaction 17beta-estradiol + reduced [NADPH--hemoprotein reductase] + O2 = 7alpha-hydroxy-17beta-estradiol + oxidized [NADPH--hemoprotein reductase] + H2O + H(+). It catalyses the reaction 17beta-estradiol + reduced [NADPH--hemoprotein reductase] + O2 = 15alpha-hydroxy-17beta-estradiol + oxidized [NADPH--hemoprotein reductase] + H2O + H(+). The enzyme catalyses (5Z,8Z,11Z)-eicosatrienoate + reduced [NADPH--hemoprotein reductase] + O2 = 19-hydroxy-(5Z,8Z,11Z)-eicosatrienoate + oxidized [NADPH--hemoprotein reductase] + H2O + H(+). The catalysed reaction is (5Z,8Z,11Z,14Z)-eicosatetraenoate + reduced [NADPH--hemoprotein reductase] + O2 = 16-hydroxy-(5Z,8Z,11Z,14Z)-eicosatetraenoate + oxidized [NADPH--hemoprotein reductase] + H2O + H(+). It carries out the reaction (5Z,8Z,11Z,14Z)-eicosatetraenoate + reduced [NADPH--hemoprotein reductase] + O2 = 17-hydroxy-(5Z,8Z,11Z,14Z)-eicosatetraenoate + oxidized [NADPH--hemoprotein reductase] + H2O + H(+). It catalyses the reaction (5Z,8Z,11Z,14Z)-eicosatetraenoate + reduced [NADPH--hemoprotein reductase] + O2 = 18-hydroxy-(5Z,8Z,11Z,14Z)-eicosatetraenoate + oxidized [NADPH--hemoprotein reductase] + H2O + H(+). The enzyme catalyses (5Z,8Z,11Z,14Z)-eicosatetraenoate + reduced [NADPH--hemoprotein reductase] + O2 = 19-hydroxy-(5Z,8Z,11Z,14Z)-eicosatetraenoate + oxidized [NADPH--hemoprotein reductase] + H2O + H(+). The catalysed reaction is (5Z,8Z,11Z,14Z,17Z)-eicosapentaenoate + reduced [NADPH--hemoprotein reductase] + O2 = 19-hydroxy-(5Z,8Z,11Z,14Z,17Z)-eicosapentaenoate + oxidized [NADPH--hemoprotein reductase] + H2O + H(+). It carries out the reaction (5Z,8Z,11Z,14Z)-eicosatetraenoate + reduced [NADPH--hemoprotein reductase] + O2 = (8R,9S)-epoxy-(5Z,11Z,14Z)-eicosatrienoate + oxidized [NADPH--hemoprotein reductase] + H2O + H(+). It catalyses the reaction (5Z,8Z,11Z,14Z)-eicosatetraenoate + reduced [NADPH--hemoprotein reductase] + O2 = (11R,12S)-epoxy-(5Z,8Z,14Z)-eicosatrienoate + oxidized [NADPH--hemoprotein reductase] + H2O + H(+). The enzyme catalyses (5Z,8Z,11Z,14Z)-eicosatetraenoate + reduced [NADPH--hemoprotein reductase] + O2 = (14S,15R)-epoxy-(5Z,8Z,11Z)-eicosatrienoate + oxidized [NADPH--hemoprotein reductase] + H2O + H(+). The catalysed reaction is (5Z,8Z,11Z,14Z)-eicosatetraenoate + reduced [NADPH--hemoprotein reductase] + O2 = (14R,15S)-epoxy-(5Z,8Z,11Z)-eicosatrienoate + oxidized [NADPH--hemoprotein reductase] + H2O + H(+). It carries out the reaction (5Z,8Z,11Z,14Z,17Z)-eicosapentaenoate + reduced [NADPH--hemoprotein reductase] + O2 = (17R,18S)-epoxy-(5Z,8Z,11Z,14Z)-eicosatetraenoate + oxidized [NADPH--hemoprotein reductase] + H2O + H(+). It catalyses the reaction (4Z,7Z,10Z,13Z,16Z,19Z)-docosahexaenoate + reduced [NADPH--hemoprotein reductase] + O2 = (19S,20R)-epoxy-(4Z,7Z,10Z,13Z,16Z)-docosapentaenoate + oxidized [NADPH--hemoprotein reductase] + H2O + H(+). The enzyme catalyses (4Z,7Z,10Z,13Z,16Z,19Z)-docosahexaenoate + reduced [NADPH--hemoprotein reductase] + O2 = (19R,20S)-epoxy-(4Z,7Z,10Z,13Z,16Z)-docosapentaenoate + oxidized [NADPH--hemoprotein reductase] + H2O + H(+). The catalysed reaction is all-trans-retinol + reduced [NADPH--hemoprotein reductase] + O2 = all-trans-retinal + oxidized [NADPH--hemoprotein reductase] + 2 H2O + H(+). It carries out the reaction all-trans-retinal + reduced [NADPH--hemoprotein reductase] + O2 = all-trans-retinoate + oxidized [NADPH--hemoprotein reductase] + H2O + 2 H(+). It catalyses the reaction (13S)-hydroperoxy-(9Z,11E)-octadecadienoate = 13-oxo-(9Z,11E)-octadecadienoate + H2O. The enzyme catalyses (12S)-hydroperoxy-(5Z,8Z,10E,14Z)-eicosatetraenoate = 12-oxo-(5Z,8Z,10E,14Z)-eicosatetraenoate + H2O. The catalysed reaction is (15S)-hydroperoxy-(5Z,8Z,11Z,13E)-eicosatetraenoate = 15-oxo-(5Z,8Z,11Z,13E)-eicosatetraenoate + H2O. It carries out the reaction (5S)-hydroperoxy-(6E,8Z,11Z,14Z)-eicosatetraenoate = 5-oxo-(6E,8Z,11Z,14Z)-eicosatetraenoate + H2O. It functions in the pathway steroid hormone biosynthesis. The protein operates within lipid metabolism; fatty acid metabolism. Its pathway is cofactor metabolism; retinol metabolism. A cytochrome P450 monooxygenase involved in the metabolism of various endogenous substrates, including fatty acids, steroid hormones and vitamins. Mechanistically, uses molecular oxygen inserting one oxygen atom into a substrate, and reducing the second into a water molecule, with two electrons provided by NADPH via cytochrome P450 reductase (CPR; NADPH-ferrihemoprotein reductase). Catalyzes the hydroxylation of carbon-hydrogen bonds. Exhibits high catalytic activity for the formation of hydroxyestrogens from estrone (E1) and 17beta-estradiol (E2), namely 2-hydroxy E1 and E2, as well as D-ring hydroxylated E1 and E2 at the C15alpha and C16alpha positions. Displays different regioselectivities for polyunsaturated fatty acids (PUFA) hydroxylation. Catalyzes the epoxidation of double bonds of certain PUFA. Converts arachidonic acid toward epoxyeicosatrienoic acid (EET) regioisomers, 8,9-, 11,12-, and 14,15-EET, that function as lipid mediators in the vascular system. Displays an absolute stereoselectivity in the epoxidation of eicosapentaenoic acid (EPA) producing the 17(R),18(S) enantiomer. May play an important role in all-trans retinoic acid biosynthesis in extrahepatic tissues. Catalyzes two successive oxidative transformation of all-trans retinol to all-trans retinal and then to the active form all-trans retinoic acid. May also participate in eicosanoids metabolism by converting hydroperoxide species into oxo metabolites (lipoxygenase-like reaction, NADPH-independent). The sequence is that of Cytochrome P450 1A1 (CYP1A1) from Macaca mulatta (Rhesus macaque).